The following is a 313-amino-acid chain: D-alanine--D-alanine ligase (313 aa).

The ATP-grasp domain occupies 108–308 (KLVWQQTGVP…YSELVVKVLA (201 aa)). 138 to 193 (VAKLGLPLFVKPASEGSSVAVLKVKTADALPAALSEAATHDKIVIVEKSIEGGGEY) contributes to the ATP binding site. Asp262, Glu275, and Asn277 together coordinate Mg(2+).

This sequence belongs to the D-alanine--D-alanine ligase family. Mg(2+) is required as a cofactor. It depends on Mn(2+) as a cofactor.

It localises to the cytoplasm. It catalyses the reaction 2 D-alanine + ATP = D-alanyl-D-alanine + ADP + phosphate + H(+). It participates in cell wall biogenesis; peptidoglycan biosynthesis. In terms of biological role, cell wall formation. This Burkholderia ambifaria (strain ATCC BAA-244 / DSM 16087 / CCUG 44356 / LMG 19182 / AMMD) (Burkholderia cepacia (strain AMMD)) protein is D-alanine--D-alanine ligase.